The primary structure comprises 252 residues: Chitooligosaccharide deacetylase (252 aa).

Mg(2+)-binding residues include His-61 and His-125.

Belongs to the YdjC deacetylase family. ChbG subfamily. In terms of assembly, homodimer. It depends on Mg(2+) as a cofactor.

The protein localises to the cytoplasm. It carries out the reaction N,N'-diacetylchitobiose + H2O = N-acetyl-beta-D-glucosaminyl-(1-&gt;4)-D-glucosamine + acetate. The enzyme catalyses diacetylchitobiose-6'-phosphate + H2O = N'-monoacetylchitobiose-6'-phosphate + acetate. Its pathway is glycan degradation; chitin degradation. Functionally, involved in the degradation of chitin. ChbG is essential for growth on the acetylated chitooligosaccharides chitobiose and chitotriose but is dispensable for growth on cellobiose and chitosan dimer, the deacetylated form of chitobiose. Deacetylation of chitobiose-6-P and chitotriose-6-P is necessary for both the activation of the chb promoter by the regulatory protein ChbR and the hydrolysis of phosphorylated beta-glucosides by the phospho-beta-glucosidase ChbF. Catalyzes the removal of only one acetyl group from chitobiose-6-P to yield monoacetylchitobiose-6-P, the inducer of ChbR and the substrate of ChbF. The sequence is that of Chitooligosaccharide deacetylase from Salmonella paratyphi C (strain RKS4594).